A 301-amino-acid chain; its full sequence is Protoheme IX farnesyltransferase 1 (301 aa).

The next 9 membrane-spanning stretches (helical) occupy residues V29–V49, V51–L71, A101–N121, L123–L143, N150–T170, A177–I197, C223–M243, C244–W264, and F281–S301.

This sequence belongs to the UbiA prenyltransferase family. Protoheme IX farnesyltransferase subfamily.

It localises to the cell inner membrane. The catalysed reaction is heme b + (2E,6E)-farnesyl diphosphate + H2O = Fe(II)-heme o + diphosphate. It functions in the pathway porphyrin-containing compound metabolism; heme O biosynthesis; heme O from protoheme: step 1/1. Converts heme B (protoheme IX) to heme O by substitution of the vinyl group on carbon 2 of heme B porphyrin ring with a hydroxyethyl farnesyl side group. In Shewanella putrefaciens (strain CN-32 / ATCC BAA-453), this protein is Protoheme IX farnesyltransferase 1.